Reading from the N-terminus, the 211-residue chain is Glycerol-3-phosphate acyltransferase (211 aa).

5 helical membrane passes run 5 to 25 (ALGM…ILFC), 58 to 78 (VLVF…ALGV), 80 to 100 (PLYL…PVFF), 112 to 132 (LGAI…TWLL), and 138 to 158 (GYSS…VWWF).

The protein belongs to the PlsY family. In terms of assembly, probably interacts with PlsX.

Its subcellular location is the cell inner membrane. It catalyses the reaction an acyl phosphate + sn-glycerol 3-phosphate = a 1-acyl-sn-glycero-3-phosphate + phosphate. It participates in lipid metabolism; phospholipid metabolism. In terms of biological role, catalyzes the transfer of an acyl group from acyl-phosphate (acyl-PO(4)) to glycerol-3-phosphate (G3P) to form lysophosphatidic acid (LPA). This enzyme utilizes acyl-phosphate as fatty acyl donor, but not acyl-CoA or acyl-ACP. The polypeptide is Glycerol-3-phosphate acyltransferase (Pectobacterium atrosepticum (strain SCRI 1043 / ATCC BAA-672) (Erwinia carotovora subsp. atroseptica)).